A 119-amino-acid chain; its full sequence is MSRVKRSVTAKKKRRKIFKLAKGFFGARSRLLRTATEAVNRALNYAFRDRRVRKREFRKLWIARINAASRAQGLTYSRLIDGLRKSHVEIDRKVLADIAVNDPRGFSEIVLLAKGETVS.

Belongs to the bacterial ribosomal protein bL20 family.

Functionally, binds directly to 23S ribosomal RNA and is necessary for the in vitro assembly process of the 50S ribosomal subunit. It is not involved in the protein synthesizing functions of that subunit. The protein is Large ribosomal subunit protein bL20 of Syntrophus aciditrophicus (strain SB).